We begin with the raw amino-acid sequence, 714 residues long: Protein spire homolog 2 (714 aa).

A KIND domain is found at 22-203 (LSLEEVLKAY…RALFVETLEL (182 aa)). The tract at residues 136–162 (DSEDSGCGAADEGYGGPEEEEEAEGVP) is disordered. WH2 domains are found at residues 248 to 262 (QLMR…LKKV), 278 to 296 (PFEM…LRKV), and 342 to 359 (LHEK…LRPV). Residues serine 371, serine 440, serine 442, and serine 476 each carry the phosphoserine modification. A disordered region spans residues 453–516 (VASGLQSATH…SSGDRPEASM (64 aa)). The span at 486-496 (DQGTCPASVSD) shows a compositional bias: polar residues. Positions 534–554 (LALTVEEVMDVRRVLVKAEME) are spir-box.

It belongs to the spire family.

The protein resides in the cytoplasm. Its subcellular location is the cytoskeleton. The protein localises to the cytosol. It localises to the cell membrane. It is found in the cytoplasmic vesicle membrane. Functionally, acts as an actin nucleation factor, remains associated with the slow-growing pointed end of the new filament. Involved in intracellular vesicle transport along actin fibers, providing a novel link between actin cytoskeleton dynamics and intracellular transport. Required for asymmetric spindle positioning and asymmetric cell division during meiosis. Required for normal formation of the cleavage furrow and for polar body extrusion during female germ cell meiosis. Also acts in the nucleus: together with SPIRE1 and SPIRE2, promotes assembly of nuclear actin filaments in response to DNA damage in order to facilitate movement of chromatin and repair factors after DNA damage. The polypeptide is Protein spire homolog 2 (SPIRE2) (Homo sapiens (Human)).